Here is a 219-residue protein sequence, read N- to C-terminus: Thiamine-phosphate synthase (219 aa).

Residues 44-48 (QFREK) and asparagine 79 contribute to the 4-amino-2-methyl-5-(diphosphooxymethyl)pyrimidine site. Positions 80 and 99 each coordinate Mg(2+). Serine 117 lines the 4-amino-2-methyl-5-(diphosphooxymethyl)pyrimidine pocket. 143–145 (TST) serves as a coordination point for 2-[(2R,5Z)-2-carboxy-4-methylthiazol-5(2H)-ylidene]ethyl phosphate. Lysine 146 is a 4-amino-2-methyl-5-(diphosphooxymethyl)pyrimidine binding site. 2-[(2R,5Z)-2-carboxy-4-methylthiazol-5(2H)-ylidene]ethyl phosphate is bound by residues glycine 175 and 195–196 (IS).

This sequence belongs to the thiamine-phosphate synthase family. Mg(2+) serves as cofactor.

The enzyme catalyses 2-[(2R,5Z)-2-carboxy-4-methylthiazol-5(2H)-ylidene]ethyl phosphate + 4-amino-2-methyl-5-(diphosphooxymethyl)pyrimidine + 2 H(+) = thiamine phosphate + CO2 + diphosphate. It catalyses the reaction 2-(2-carboxy-4-methylthiazol-5-yl)ethyl phosphate + 4-amino-2-methyl-5-(diphosphooxymethyl)pyrimidine + 2 H(+) = thiamine phosphate + CO2 + diphosphate. It carries out the reaction 4-methyl-5-(2-phosphooxyethyl)-thiazole + 4-amino-2-methyl-5-(diphosphooxymethyl)pyrimidine + H(+) = thiamine phosphate + diphosphate. Its pathway is cofactor biosynthesis; thiamine diphosphate biosynthesis; thiamine phosphate from 4-amino-2-methyl-5-diphosphomethylpyrimidine and 4-methyl-5-(2-phosphoethyl)-thiazole: step 1/1. Functionally, condenses 4-methyl-5-(beta-hydroxyethyl)thiazole monophosphate (THZ-P) and 2-methyl-4-amino-5-hydroxymethyl pyrimidine pyrophosphate (HMP-PP) to form thiamine monophosphate (TMP). The chain is Thiamine-phosphate synthase from Bacillus cereus (strain ZK / E33L).